The following is a 598-amino-acid chain: Glutamine--fructose-6-phosphate aminotransferase [isomerizing] (598 aa).

Cysteine 2 serves as the catalytic Nucleophile; for GATase activity. In terms of domain architecture, Glutamine amidotransferase type-2 spans 2-218; sequence CGIVGYIGNN…DLSLGYASKD (217 aa). 2 SIS domains span residues 277–421 and 450–588; these read VFDE…KRNL and LSKR…VDMP. Residue lysine 593 is the For Fru-6P isomerization activity of the active site.

Homodimer.

The protein resides in the cytoplasm. The catalysed reaction is D-fructose 6-phosphate + L-glutamine = D-glucosamine 6-phosphate + L-glutamate. In terms of biological role, catalyzes the first step in hexosamine metabolism, converting fructose-6P into glucosamine-6P using glutamine as a nitrogen source. This chain is Glutamine--fructose-6-phosphate aminotransferase [isomerizing], found in Campylobacter jejuni subsp. jejuni serotype O:2 (strain ATCC 700819 / NCTC 11168).